Reading from the N-terminus, the 95-residue chain is Large ribosomal subunit protein uL23 (95 aa).

It belongs to the universal ribosomal protein uL23 family. In terms of assembly, part of the 50S ribosomal subunit. Contacts protein L29, and trigger factor when it is bound to the ribosome.

Functionally, one of the early assembly proteins it binds 23S rRNA. One of the proteins that surrounds the polypeptide exit tunnel on the outside of the ribosome. Forms the main docking site for trigger factor binding to the ribosome. The polypeptide is Large ribosomal subunit protein uL23 (Desulforudis audaxviator (strain MP104C)).